The sequence spans 242 residues: Ribonuclease PH (242 aa).

Phosphate is bound by residues Arg89 and 127 to 129 (GTR).

It belongs to the RNase PH family. As to quaternary structure, homohexameric ring arranged as a trimer of dimers.

It catalyses the reaction tRNA(n+1) + phosphate = tRNA(n) + a ribonucleoside 5'-diphosphate. Phosphorolytic 3'-5' exoribonuclease that plays an important role in tRNA 3'-end maturation. Removes nucleotide residues following the 3'-CCA terminus of tRNAs; can also add nucleotides to the ends of RNA molecules by using nucleoside diphosphates as substrates, but this may not be physiologically important. Probably plays a role in initiation of 16S rRNA degradation (leading to ribosome degradation) during starvation. This is Ribonuclease PH from Neisseria gonorrhoeae (strain ATCC 700825 / FA 1090).